Consider the following 815-residue polypeptide: Phenylalanine--tRNA ligase beta subunit (815 aa).

Positions 40-155 (APPFDKIVVA…EDAPVGQNIR (116 aa)) constitute a tRNA-binding domain. The B5 domain maps to 406 to 485 (PQRRPVSLRL…RIYGFERIAA (80 aa)). The Mg(2+) site is built by D463, D469, E472, and E473. One can recognise an FDX-ACB domain in the interval 712–814 (SKFPAAVRDL…LGEAFQARLR (103 aa)).

This sequence belongs to the phenylalanyl-tRNA synthetase beta subunit family. Type 1 subfamily. Tetramer of two alpha and two beta subunits. Mg(2+) is required as a cofactor.

The protein resides in the cytoplasm. The catalysed reaction is tRNA(Phe) + L-phenylalanine + ATP = L-phenylalanyl-tRNA(Phe) + AMP + diphosphate + H(+). The protein is Phenylalanine--tRNA ligase beta subunit of Cupriavidus pinatubonensis (strain JMP 134 / LMG 1197) (Cupriavidus necator (strain JMP 134)).